The sequence spans 147 residues: Hemoglobin subunit gamma-2 (147 aa).

A Globin domain is found at 3–147 (HFTEEDKATI…VASALSSRYH (145 aa)). The residue at position 13 (Thr-13) is a Phosphothreonine. Phosphoserine occurs at positions 45, 51, and 53. The residue at position 60 (Lys-60) is an N6-acetyllysine. His-64 contributes to the heme b binding site. N6-acetyllysine is present on Lys-83. His-93 serves as a coordination point for heme b. Position 94 is an S-nitrosocysteine (Cys-94). 3 positions are modified to phosphoserine: Ser-140, Ser-143, and Ser-144.

The protein belongs to the globin family. In terms of assembly, heterotetramer of two alpha chains and two gamma chains in fetal hemoglobin (Hb F). In terms of tissue distribution, red blood cells.

Gamma chains make up the fetal hemoglobin F, in combination with alpha chains. The sequence is that of Hemoglobin subunit gamma-2 (HBG2) from Gorilla gorilla gorilla (Western lowland gorilla).